The following is a 406-amino-acid chain: Cysteine desulfurase IscS (406 aa).

Pyridoxal 5'-phosphate contacts are provided by residues 75–76 (AT), asparagine 155, glutamine 183, and 203–205 (SSH). Lysine 206 is modified (N6-(pyridoxal phosphate)lysine). A pyridoxal 5'-phosphate-binding site is contributed by threonine 243. The active-site Cysteine persulfide intermediate is cysteine 330. [2Fe-2S] cluster is bound at residue cysteine 330.

The protein belongs to the class-V pyridoxal-phosphate-dependent aminotransferase family. NifS/IscS subfamily. In terms of assembly, homodimer. Forms a heterotetramer with IscU, interacts with other sulfur acceptors. Pyridoxal 5'-phosphate is required as a cofactor.

Its subcellular location is the cytoplasm. It catalyses the reaction (sulfur carrier)-H + L-cysteine = (sulfur carrier)-SH + L-alanine. The protein operates within cofactor biosynthesis; iron-sulfur cluster biosynthesis. In terms of biological role, master enzyme that delivers sulfur to a number of partners involved in Fe-S cluster assembly, tRNA modification or cofactor biosynthesis. Catalyzes the removal of elemental sulfur atoms from cysteine to produce alanine. Functions as a sulfur delivery protein for Fe-S cluster synthesis onto IscU, an Fe-S scaffold assembly protein, as well as other S acceptor proteins. This is Cysteine desulfurase IscS from Glaesserella parasuis serovar 5 (strain SH0165) (Haemophilus parasuis).